The sequence spans 609 residues: Alpha-fetoprotein (609 aa).

A signal peptide spans 1–18 (MKWVESIFLIFLLNFTES). 3 consecutive Albumin domains span residues 19–210 (RTLH…ATVT), 211–402 (KELR…EELQ), and 403–601 (KYIQ…KLIS). Histidine 22 lines the Cu(2+) pocket. Intrachain disulfides connect cysteine 99-cysteine 114, cysteine 113-cysteine 124, cysteine 148-cysteine 193, cysteine 192-cysteine 201, cysteine 224-cysteine 270, cysteine 269-cysteine 277, cysteine 289-cysteine 303, and cysteine 302-cysteine 313. Phosphoserine; by FAM20C occurs at positions 111, 115, and 117. Asparagine 251 carries N-linked (GlcNAc...) asparagine glycosylation. A Phosphoserine; by FAM20C modification is found at serine 344. Cystine bridges form between cysteine 384/cysteine 393, cysteine 416/cysteine 462, cysteine 461/cysteine 472, cysteine 485/cysteine 501, cysteine 500/cysteine 511, cysteine 538/cysteine 583, and cysteine 582/cysteine 591. Phosphoserine; by FAM20C is present on residues serine 444 and serine 445.

The protein belongs to the ALB/AFP/VDB family. In terms of assembly, dimeric and trimeric forms have been found in addition to the monomeric form. Independent studies suggest heterogeneity of the N-terminal sequence of the mature protein and of the cleavage site of the signal sequence. In terms of processing, sulfated. As to expression, plasma. Synthesized by the fetal liver and yolk sac.

The protein resides in the secreted. Binds copper, nickel, and fatty acids as well as, and bilirubin less well than, serum albumin. Only a small percentage (less than 2%) of the human AFP shows estrogen-binding properties. This chain is Alpha-fetoprotein (AFP), found in Homo sapiens (Human).